The chain runs to 115 residues: Hydrogenase maturation factor HypA (115 aa).

A Ni(2+)-binding site is contributed by histidine 2. 4 residues coordinate Zn(2+): cysteine 73, cysteine 76, cysteine 89, and cysteine 92.

The protein belongs to the HypA/HybF family.

In terms of biological role, involved in the maturation of [NiFe] hydrogenases. Required for nickel insertion into the metal center of the hydrogenase. This is Hydrogenase maturation factor HypA from Shewanella halifaxensis (strain HAW-EB4).